We begin with the raw amino-acid sequence, 354 residues long: Uroporphyrinogen decarboxylase (354 aa).

Residues 27–31 (RQAGR), Asp-77, Tyr-154, Thr-209, and His-327 contribute to the substrate site.

The protein belongs to the uroporphyrinogen decarboxylase family. Homodimer.

The protein localises to the cytoplasm. The enzyme catalyses uroporphyrinogen III + 4 H(+) = coproporphyrinogen III + 4 CO2. Its pathway is porphyrin-containing compound metabolism; protoporphyrin-IX biosynthesis; coproporphyrinogen-III from 5-aminolevulinate: step 4/4. Catalyzes the decarboxylation of four acetate groups of uroporphyrinogen-III to yield coproporphyrinogen-III. This is Uroporphyrinogen decarboxylase from Escherichia coli O81 (strain ED1a).